The sequence spans 230 residues: Orotidine 5'-phosphate decarboxylase (230 aa).

Residues Asp-10, Lys-32, 59–68 (DLKYHDIPNT), Thr-119, Arg-180, Gln-189, Gly-209, and Arg-210 each bind substrate. Catalysis depends on Lys-61, which acts as the Proton donor.

The protein belongs to the OMP decarboxylase family. Type 1 subfamily. As to quaternary structure, homodimer.

The enzyme catalyses orotidine 5'-phosphate + H(+) = UMP + CO2. It participates in pyrimidine metabolism; UMP biosynthesis via de novo pathway; UMP from orotate: step 2/2. In terms of biological role, catalyzes the decarboxylation of orotidine 5'-monophosphate (OMP) to uridine 5'-monophosphate (UMP). The polypeptide is Orotidine 5'-phosphate decarboxylase (Glaesserella parasuis serovar 5 (strain SH0165) (Haemophilus parasuis)).